We begin with the raw amino-acid sequence, 406 residues long: Acetylornithine aminotransferase (406 aa).

Pyridoxal 5'-phosphate-binding positions include 113 to 114 (GT) and phenylalanine 145. Residue arginine 148 coordinates N(2)-acetyl-L-ornithine. 233 to 236 (DEIQ) lines the pyridoxal 5'-phosphate pocket. Lysine 262 carries the N6-(pyridoxal phosphate)lysine modification. Residue serine 290 coordinates N(2)-acetyl-L-ornithine. Threonine 291 provides a ligand contact to pyridoxal 5'-phosphate.

Belongs to the class-III pyridoxal-phosphate-dependent aminotransferase family. ArgD subfamily. In terms of assembly, homodimer. The cofactor is pyridoxal 5'-phosphate.

It is found in the cytoplasm. It carries out the reaction N(2)-acetyl-L-ornithine + 2-oxoglutarate = N-acetyl-L-glutamate 5-semialdehyde + L-glutamate. Its pathway is amino-acid biosynthesis; L-arginine biosynthesis; N(2)-acetyl-L-ornithine from L-glutamate: step 4/4. The polypeptide is Acetylornithine aminotransferase (Leptospira interrogans serogroup Icterohaemorrhagiae serovar Lai (strain 56601)).